Reading from the N-terminus, the 22-residue chain is MRHSNKIRDEEMVNNTRLNXXA.

Residues 1 to 11 (MRHSNKIRDEE) are compositionally biased toward basic and acidic residues. The disordered stretch occupies residues 1 to 22 (MRHSNKIRDEEMVNNTRLNXXA). Positions 13–22 (VNNTRLNXXA) are enriched in polar residues.

The N-terminus is blocked.

The chain is Unknown endosperm protein L from Hordeum vulgare (Barley).